Consider the following 206-residue polypeptide: ATP-dependent Clp protease proteolytic subunit (206 aa).

S107 acts as the Nucleophile in catalysis. H132 is an active-site residue.

The protein belongs to the peptidase S14 family. As to quaternary structure, fourteen ClpP subunits assemble into 2 heptameric rings which stack back to back to give a disk-like structure with a central cavity, resembling the structure of eukaryotic proteasomes.

Its subcellular location is the cytoplasm. The catalysed reaction is Hydrolysis of proteins to small peptides in the presence of ATP and magnesium. alpha-casein is the usual test substrate. In the absence of ATP, only oligopeptides shorter than five residues are hydrolyzed (such as succinyl-Leu-Tyr-|-NHMec, and Leu-Tyr-Leu-|-Tyr-Trp, in which cleavage of the -Tyr-|-Leu- and -Tyr-|-Trp bonds also occurs).. Functionally, cleaves peptides in various proteins in a process that requires ATP hydrolysis. Has a chymotrypsin-like activity. Plays a major role in the degradation of misfolded proteins. This chain is ATP-dependent Clp protease proteolytic subunit, found in Idiomarina loihiensis (strain ATCC BAA-735 / DSM 15497 / L2-TR).